Reading from the N-terminus, the 1352-residue chain is Spike glycoprotein (1352 aa).

The first 12 residues, M1–L12, serve as a signal peptide directing secretion. Topologically, residues I13 to P1297 are extracellular. In terms of domain architecture, BetaCoV S1-NTD spans Q21–Y356. N-linked (GlcNAc...) asparagine; by host glycosylation is found at N30, N71, N111, N132, N162, N172, N227, and N241. 2 cysteine pairs are disulfide-bonded: C191–C242 and C344–C354. An N-linked (GlcNAc...) asparagine; by host glycan is attached at N384. The BetaCoV S1-CTD domain maps to T386–M592. C388 and C412 form a disulfide bridge. A glycan (N-linked (GlcNAc...) asparagine; by host) is linked at N415. Cystine bridges form between C430/C483 and C442/C590. N-linked (GlcNAc...) asparagine; by host glycans are attached at residues N492, N624, N723, N762, N773, N784, and N869. 2 fusion peptide regions span residues S887–Y908 and Q906–V928. The cysteines at positions 911 and 924 are disulfide-linked. The heptad repeat 1 stretch occupies residues Q993–F1043. The stretch at Q1022–I1066 forms a coiled coil. N1144, N1147, N1174, N1226, N1242, N1257, N1278, and N1289 each carry an N-linked (GlcNAc...) asparagine; by host glycan. Positions G1247–E1286 are heptad repeat 2. The stretch at T1259 to L1287 forms a coiled coil. Residues W1298–L1318 traverse the membrane as a helical segment. The Cytoplasmic portion of the chain corresponds to L1319 to H1352. The short motif at H1350–H1352 is the KxHxx element.

This sequence belongs to the betacoronaviruses spike protein family. Homotrimer; each monomer consists of a S1 and a S2 subunit. The resulting peplomers protrude from the virus surface as spikes. Post-translationally, specific enzymatic cleavages in vivo yield mature proteins. The precursor is processed into S1 and S2 by host cell furin or another cellular protease to yield the mature S1 and S2 proteins. Additionally, a second cleavage leads to the release of a fusion peptide after viral attachment to host cell receptor. The cytoplasmic Cys-rich domain is palmitoylated. Spike glycoprotein is digested within host endosomes.

It is found in the virion membrane. The protein resides in the host endoplasmic reticulum-Golgi intermediate compartment membrane. Its subcellular location is the host cell membrane. Attaches the virion to the cell membrane by interacting with host receptor, initiating the infection. In terms of biological role, mediates fusion of the virion and cellular membranes by acting as a class I viral fusion protein. Under the current model, the protein has at least three conformational states: pre-fusion native state, pre-hairpin intermediate state, and post-fusion hairpin state. During viral and target cell membrane fusion, the coiled coil regions (heptad repeats) assume a trimer-of-hairpins structure, positioning the fusion peptide in close proximity to the C-terminal region of the ectodomain. The formation of this structure appears to drive apposition and subsequent fusion of viral and target cell membranes. Its function is as follows. Acts as a viral fusion peptide which is unmasked following S2 cleavage occurring upon virus endocytosis. In Bat coronavirus HKU4 (BtCoV), this protein is Spike glycoprotein.